We begin with the raw amino-acid sequence, 420 residues long: Methylaspartate ammonia-lyase 1 (420 aa).

Gln-173 serves as a coordination point for (2S,3S)-3-methyl-L-aspartate. Residues Asp-237, Glu-272, and Asp-306 each contribute to the Mg(2+) site. Gln-328 provides a ligand contact to (2S,3S)-3-methyl-L-aspartate. The active-site Proton acceptor is the Lys-330. A (2S,3S)-3-methyl-L-aspartate-binding site is contributed by 359-360; it reads SC.

In terms of assembly, homodimer. Mg(2+) serves as cofactor.

It catalyses the reaction (2S,3S)-3-methyl-L-aspartate = mesaconate + NH4(+). It functions in the pathway amino-acid degradation; L-glutamate degradation via mesaconate pathway; acetate and pyruvate from L-glutamate: step 2/4. Functionally, involved in the methylaspartate cycle. Catalyzes the formation of the alpha,beta-unsaturated bond by the reversible anti elimination of ammonia from L-threo-beta-methylaspartate (L-threo-(2S,3S)-3-methylaspartate) to give mesaconate. It can also catalyze the amination of fumarate and ethylfumarate, and the deamination of hydroxylamine, hydrazine, methylamine and ethylamine. The protein is Methylaspartate ammonia-lyase 1 of Carboxydothermus hydrogenoformans (strain ATCC BAA-161 / DSM 6008 / Z-2901).